The sequence spans 467 residues: Gamma-aminobutyric acid receptor subunit gamma-3 (467 aa).

The signal sequence occupies residues 1 to 17 (MAAKLLLLLCLFSGLHA). Residues 18–256 (RSRRVEEDDS…FELSRRMGYF (239 aa)) are Extracellular-facing. Residue asparagine 110 is glycosylated (N-linked (GlcNAc...) asparagine). An intrachain disulfide couples cysteine 171 to cysteine 185. Residue asparagine 228 is glycosylated (N-linked (GlcNAc...) asparagine). A helical membrane pass occupies residues 257-277 (TIQTYIPCILTVVLSWVSFWI). The Cytoplasmic portion of the chain corresponds to 278–283 (KKDATP). Residues 284–303 (ARTTLGITTVLTMTTLSTIA) traverse the membrane as a helical segment. At 304–311 (RKSLPRVS) the chain is on the extracellular side. The chain crosses the membrane as a helical span at residues 312 to 332 (YVTAMDLFVTVCFLFVFAALM). The Cytoplasmic segment spans residues 333–446 (EYATLNYYSS…DVSELDSYSR (114 aa)). The chain crosses the membrane as a helical span at residues 447-467 (VFFPTSFLLFNLVYWVGYLYL).

Belongs to the ligand-gated ion channel (TC 1.A.9) family. Gamma-aminobutyric acid receptor (TC 1.A.9.5) subfamily. GABRG3 sub-subfamily. In terms of assembly, heteropentamer, formed by a combination of alpha (GABRA1-6), beta (GABRB1-3), gamma (GABRG1-3), delta (GABRD), epsilon (GABRE), rho (GABRR1-3), pi (GABRP) and theta (GABRQ) chains, each subunit exhibiting distinct physiological and pharmacological properties. May be palmitoylated. In terms of tissue distribution, expressed in brain.

The protein localises to the postsynaptic cell membrane. The protein resides in the cell membrane. The enzyme catalyses chloride(in) = chloride(out). Allosterically potentiated by alphaxalone. Allosterically inhibited by pregnenolone sulfate. Inhibited by zinc and lanthanum. In terms of biological role, gamma subunit of the heteropentameric ligand-gated chloride channel gated by gamma-aminobutyric acid (GABA), a major inhibitory neurotransmitter in the brain. GABA-gated chloride channels, also named GABA(A) receptors (GABAAR), consist of five subunits arranged around a central pore and contain GABA active binding site(s) located at the alpha and beta subunit interface(s). When activated by GABA, GABAARs selectively allow the flow of chloride across the cell membrane down their electrochemical gradient. This is Gamma-aminobutyric acid receptor subunit gamma-3 from Rattus norvegicus (Rat).